A 207-amino-acid chain; its full sequence is Ras-related protein Rab7 (207 aa).

GTP is bound by residues 15-22, 63-67, and 125-128; these read GDSGVGKT, DTAGQ, and NKID. 2 S-geranylgeranyl cysteine lipidation sites follow: C205 and C207. At C207 the chain carries Cysteine methyl ester.

This sequence belongs to the small GTPase superfamily. Rab family.

It is found in the cell membrane. Protein transport. Probably involved in vesicular traffic. This is Ras-related protein Rab7 from Prunus armeniaca (Apricot).